We begin with the raw amino-acid sequence, 432 residues long: G-protein coupled receptor 22 (432 aa).

Topologically, residues 1–45 (MCFSPVLEINMQSESNVTVRDDIEDIDTNMYQPLSYPLSFQVSLT) are cytoplasmic. Residues 46 to 66 (GFLMLEIVLGLGSNLTVLVLY) form a helical membrane-spanning segment. The Extracellular segment spans residues 67–85 (CMKSNLISSVSNIITMNLH). The helical transmembrane segment at 86-106 (VLDVIICVGCIPLTIVILLLS) threads the bilayer. Topologically, residues 107–115 (LERNTALIC) are cytoplasmic. The chain crosses the membrane as a helical span at residues 116–136 (CFHEACVSFASVSTAINVFAI). Residues 137–156 (TLDRYDISVKPANRILTMGR) are Extracellular-facing. Residues 157 to 177 (AVMLMTSIWIFSFFSFLIPFI) traverse the membrane as a helical segment. The Cytoplasmic segment spans residues 178–208 (EVNFFSLQSGNAWENKTLLCVSTSEYYTELG). Residues 209–229 (MYYHLLVQIPIFFFTVIVMLI) traverse the membrane as a helical segment. Residues 230–314 (TYTKILQALN…ERQKRVFKMS (85 aa)) lie on the Extracellular side of the membrane. The chain crosses the membrane as a helical span at residues 315–335 (LLIISTFLLCWTPISVLNTTI). Residues 336 to 348 (LCLGPSDLLVKLR) are Cytoplasmic-facing. The chain crosses the membrane as a helical span at residues 349-369 (LCFLVMAYGTTIFHPLLYAFT). Residues 370-432 (RQKFQKVLKS…KCLVPQVVTD (63 aa)) lie on the Extracellular side of the membrane.

Belongs to the G-protein coupled receptor 1 family. In terms of tissue distribution, abundant levels detected in the brain. High expression in the heart (at protein level). No detectable expression in other peripheral tissues.

The protein resides in the cell membrane. Orphan G-protein coupled receptor. Seems to act through a G(i)/G(o) mediated pathway. May be involved in ciliogenesis. The polypeptide is G-protein coupled receptor 22 (Rattus norvegicus (Rat)).